Here is a 232-residue protein sequence, read N- to C-terminus: Phosphatidylserine decarboxylase proenzyme (232 aa).

Residue Ser190 is the Schiff-base intermediate with substrate; via pyruvic acid of the active site. Pyruvic acid (Ser); by autocatalysis is present on Ser190.

The protein belongs to the phosphatidylserine decarboxylase family. PSD-A subfamily. In terms of assembly, heterodimer of a large membrane-associated beta subunit and a small pyruvoyl-containing alpha subunit. Requires pyruvate as cofactor. In terms of processing, is synthesized initially as an inactive proenzyme. Formation of the active enzyme involves a self-maturation process in which the active site pyruvoyl group is generated from an internal serine residue via an autocatalytic post-translational modification. Two non-identical subunits are generated from the proenzyme in this reaction, and the pyruvate is formed at the N-terminus of the alpha chain, which is derived from the carboxyl end of the proenzyme. The post-translation cleavage follows an unusual pathway, termed non-hydrolytic serinolysis, in which the side chain hydroxyl group of the serine supplies its oxygen atom to form the C-terminus of the beta chain, while the remainder of the serine residue undergoes an oxidative deamination to produce ammonia and the pyruvoyl prosthetic group on the alpha chain.

The protein localises to the cell membrane. The catalysed reaction is a 1,2-diacyl-sn-glycero-3-phospho-L-serine + H(+) = a 1,2-diacyl-sn-glycero-3-phosphoethanolamine + CO2. The protein operates within phospholipid metabolism; phosphatidylethanolamine biosynthesis; phosphatidylethanolamine from CDP-diacylglycerol: step 2/2. Catalyzes the formation of phosphatidylethanolamine (PtdEtn) from phosphatidylserine (PtdSer). This Rhizobium leguminosarum bv. trifolii (strain WSM2304) protein is Phosphatidylserine decarboxylase proenzyme.